The following is a 575-amino-acid chain: Transcription factor E3 (575 aa).

Serine 47 is subject to Phosphoserine; by MTOR. Residues alanine 90–glutamine 126 show a composition bias toward low complexity. The segment at alanine 90–serine 153 is disordered. The segment covering glutamate 127 to glutamine 136 has biased composition (basic and acidic residues). Arginine 188 is subject to Asymmetric dimethylarginine. The interval leucine 211 to serine 246 is disordered. The tract at residues glutamate 260 to leucine 271 is strong transcription activation domain. Serine 321 is subject to Phosphoserine; by MTOR. A Glycyl lysine isopeptide (Lys-Gly) (interchain with G-Cter in SUMO2) cross-link involves residue lysine 339. The region spanning glutamine 346 to leucine 399 is the bHLH domain. The short motif at arginine 356 to arginine 359 is the Nuclear localization signal element. Residues leucine 409–leucine 430 are leucine-zipper. 2 disordered regions span residues glycine 473–aspartate 498 and glycine 534–serine 575. Low complexity predominate over residues glycine 539 to serine 575. A phosphoserine mark is found at serine 542, serine 548, serine 554, serine 556, serine 560, and serine 568.

This sequence belongs to the MiT/TFE family. As to quaternary structure, homodimer and heterodimer; with TFEB or MITF. Interacts with RRAGC/RagC GDP-bound and RRAGD/RagD GDP-bound; promoting its recruitment to lysosomal membrane in the presence of nutrients. Interacts with TSC22D1; the interaction is enhanced in the presence of TGF-beta. Sumoylated; does not affect dimerization with MITF. Post-translationally, phosphorylation ar Ser-47 and Ser-321 by MTOR via non-canonical mTORC1 pathway regulates its stability and subcellular location, respectively. When nutrients are present, phosphorylation by MTOR at Ser-47 promotes ubiquitination by the SCF(BTRC) complex, followed by degradation. When nutrients are present, phosphorylation by MTOR at Ser-321 also promotes association with 14-3-3/YWHA adapters and retention in the cytosol. Phosphorylation at Ser-47 plays a more critical role than phosphorylation at Ser-321 for TFE3 inactivation. Inhibition of mTORC1, starvation and lysosomal disruption, promotes dephosphorylation and transcription factor activity. In terms of processing, ubiquitinated by the SCF(BTRC) and SCF(FBXW11) complexes following phosphorylation at Ser-47 by MTOR, leading to its degradation by the proteasome. In terms of tissue distribution, ubiquitous in fetal and adult tissues.

The protein resides in the cytoplasm. The protein localises to the cytosol. Its subcellular location is the nucleus. It localises to the lysosome membrane. In terms of biological role, transcription factor that acts as a master regulator of lysosomal biogenesis and immune response. Specifically recognizes and binds E-box sequences (5'-CANNTG-3'); efficient DNA-binding requires dimerization with itself or with another MiT/TFE family member such as TFEB or MITF. Involved in the cellular response to amino acid availability by acting downstream of MTOR: in the presence of nutrients, TFE3 phosphorylation by MTOR promotes its inactivation. Upon starvation or lysosomal stress, inhibition of MTOR induces TFE3 dephosphorylation, resulting in transcription factor activity. Specifically recognizes and binds the CLEAR-box sequence (5'-GTCACGTGAC-3') present in the regulatory region of many lysosomal genes, leading to activate their expression, thereby playing a central role in expression of lysosomal genes. Maintains the pluripotent state of embryonic stem cells by promoting the expression of genes such as ESRRB; mTOR-dependent TFE3 cytosolic retention and inactivation promotes exit from pluripotency. Required to maintain the naive pluripotent state of hematopoietic stem cell; mTOR-dependent cytoplasmic retention of TFE3 promotes the exit of hematopoietic stem cell from pluripotency. TFE3 activity is also involved in the inhibition of neuronal progenitor differentiation. Acts as a positive regulator of browning of adipose tissue by promoting expression of target genes; mTOR-dependent phosphorylation promotes cytoplasmic retention of TFE3 and inhibits browning of adipose tissue. In association with TFEB, activates the expression of CD40L in T-cells, thereby playing a role in T-cell-dependent antibody responses in activated CD4(+) T-cells and thymus-dependent humoral immunity. Specifically recognizes the MUE3 box, a subset of E-boxes, present in the immunoglobulin enhancer. It also binds very well to a USF/MLTF site. Promotes TGF-beta-induced transcription of COL1A2; via its interaction with TSC22D1 at E-boxes in the gene proximal promoter. May regulate lysosomal positioning in response to nutrient deprivation by promoting the expression of PIP4P1. The chain is Transcription factor E3 from Homo sapiens (Human).